Reading from the N-terminus, the 64-residue chain is Beta-defensin 1 (64 aa).

An N-terminal signal peptide occupies residues 1–20 (MRLHRLLLVFLLMVLLPVPG). Positions 21–23 (LLK) are excised as a propeptide. 3 disulfide bridges follow: C31/C60, C38/C53, and C43/C61.

This sequence belongs to the beta-defensin family. Monomer. Homodimer.

It localises to the secreted. It is found in the membrane. In terms of biological role, has bactericidal activity. May act as a ligand for C-C chemokine receptor CCR6. Positively regulates the sperm motility and bactericidal activity in a CCR6-dependent manner. Binds to CCR6 and triggers Ca2+ mobilization in the sperm which is important for its motility. The protein is Beta-defensin 1 (DEFB1) of Sus scrofa (Pig).